Here is a 241-residue protein sequence, read N- to C-terminus: Octanoyltransferase (241 aa).

In terms of domain architecture, BPL/LPL catalytic spans 43-228 (AETPDEIWLV…CLTANLDGSP (186 aa)). Residues 83 to 90 (RGGQITYH), 159 to 161 (ALG), and 172 to 174 (GVS) contribute to the substrate site. Cys-190 acts as the Acyl-thioester intermediate in catalysis.

The protein belongs to the LipB family.

It is found in the cytoplasm. The enzyme catalyses octanoyl-[ACP] + L-lysyl-[protein] = N(6)-octanoyl-L-lysyl-[protein] + holo-[ACP] + H(+). Its pathway is protein modification; protein lipoylation via endogenous pathway; protein N(6)-(lipoyl)lysine from octanoyl-[acyl-carrier-protein]: step 1/2. Its function is as follows. Catalyzes the transfer of endogenously produced octanoic acid from octanoyl-acyl-carrier-protein onto the lipoyl domains of lipoate-dependent enzymes. Lipoyl-ACP can also act as a substrate although octanoyl-ACP is likely to be the physiological substrate. The protein is Octanoyltransferase of Paraburkholderia xenovorans (strain LB400).